Consider the following 285-residue polypeptide: ATP synthase gamma chain (285 aa).

It belongs to the ATPase gamma chain family. As to quaternary structure, F-type ATPases have 2 components, CF(1) - the catalytic core - and CF(0) - the membrane proton channel. CF(1) has five subunits: alpha(3), beta(3), gamma(1), delta(1), epsilon(1). CF(0) has three main subunits: a, b and c.

It is found in the cell membrane. Produces ATP from ADP in the presence of a proton gradient across the membrane. The gamma chain is believed to be important in regulating ATPase activity and the flow of protons through the CF(0) complex. The chain is ATP synthase gamma chain from Clostridium novyi (strain NT).